The following is a 183-amino-acid chain: Adenine phosphoribosyltransferase (183 aa).

Belongs to the purine/pyrimidine phosphoribosyltransferase family. As to quaternary structure, homodimer.

Its subcellular location is the cytoplasm. It catalyses the reaction AMP + diphosphate = 5-phospho-alpha-D-ribose 1-diphosphate + adenine. Its pathway is purine metabolism; AMP biosynthesis via salvage pathway; AMP from adenine: step 1/1. Its function is as follows. Catalyzes a salvage reaction resulting in the formation of AMP, that is energically less costly than de novo synthesis. This Escherichia fergusonii (strain ATCC 35469 / DSM 13698 / CCUG 18766 / IAM 14443 / JCM 21226 / LMG 7866 / NBRC 102419 / NCTC 12128 / CDC 0568-73) protein is Adenine phosphoribosyltransferase.